Reading from the N-terminus, the 2435-residue chain is Highly reducing polyketide synthase ATR6 (2435 aa).

One can recognise a Ketosynthase family 3 (KS3) domain in the interval 18–450 (AEPIAIVSAA…GSNAHVVLDN (433 aa)). Residues Cys192, His331, and His371 each act as for beta-ketoacyl synthase activity in the active site. The interval 586 to 883 (FVFTGQGAQW…EIGPSAALGG (298 aa)) is malonyl-CoA:ACP transacylase (MAT) domain. The active-site For malonyltransferase activity is Ser682. The segment at 979 to 1125 (HDLLGGKVLG…GLVRLALNAS (147 aa)) is N-terminal hotdog fold. A dehydratase (DH) domain region spans residues 979-1291 (HDLLGGKVLG…LRGISMTSVG (313 aa)). A PKS/mFAS DH domain is found at 979 to 1296 (HDLLGGKVLG…MTSVGLQGNV (318 aa)). His1011 (for beta-hydroxyacyl dehydratase activity) is an active-site residue. Residues 1141–1296 (QYPTPARFWY…MTSVGLQGNV (156 aa)) form a C-terminal hotdog fold region. The segment at 1724–2037 (GILDTLHFAE…DHNRLRNVVI (314 aa)) is enoylreductase (ER) domain. Residues 2062-2301 (PEQTYLLVGK…ITGIAVPQPG (240 aa)) form a catalytic ketoreductase (KRc) domain region. In terms of domain architecture, Carrier spans 2353–2429 (VLLSSAVGVL…VLCQKIISRM (77 aa)). Ser2389 carries the O-(pantetheine 4'-phosphoryl)serine modification.

It functions in the pathway mycotoxin biosynthesis. Functionally, highly reducing polyketide synthase; part of the core atranone cluster (CAC) which products are predicted to catalyze most or all steps of mycotoxin atranone synthesis, starting from geranylgeranyl pyrophosphate (GGPP). The initial cyclization of GGPP to dolabellane is probably performed by the terpene cyclase ATR13. The Baeyer-Villiger oxidation near the end of the atranone synthesis, which converts atranones D and E to atranones F and G is predicted to be catalyzed by the monooxygenase ATR8. Of the CAC's other predicted gene products, the reducing PKS ATR6 might synthesize a polyketide chain. This polyketide is probably transferred onto the atranone backbone by the polyketide transferase ATR5. Other predicted CAC products include 4 oxygenases (ATR2, ATR3, ATR4, and ATR14), 3 short-chain reductases (ATR7, ATR9, and ATR10), and a methyltransferase (ATR12). These may all be involved in the various steps of atranone biosynthesis, although their specific roles must await experimental determination. The sequence is that of Highly reducing polyketide synthase ATR6 from Stachybotrys chlorohalonatus (strain IBT 40285).